We begin with the raw amino-acid sequence, 195 residues long: Orotate phosphoribosyltransferase (195 aa).

117–125 is a 5-phospho-alpha-D-ribose 1-diphosphate binding site; the sequence is EDITTTGGS. Orotate is bound by residues threonine 121 and arginine 149.

Belongs to the purine/pyrimidine phosphoribosyltransferase family. PyrE subfamily. In terms of assembly, homodimer. Mg(2+) is required as a cofactor.

The enzyme catalyses orotidine 5'-phosphate + diphosphate = orotate + 5-phospho-alpha-D-ribose 1-diphosphate. It functions in the pathway pyrimidine metabolism; UMP biosynthesis via de novo pathway; UMP from orotate: step 1/2. In terms of biological role, catalyzes the transfer of a ribosyl phosphate group from 5-phosphoribose 1-diphosphate to orotate, leading to the formation of orotidine monophosphate (OMP). The sequence is that of Orotate phosphoribosyltransferase from Acidithiobacillus ferrooxidans (strain ATCC 53993 / BNL-5-31) (Leptospirillum ferrooxidans (ATCC 53993)).